A 274-amino-acid polypeptide reads, in one-letter code: Putative bidirectional sugar transporter SWEET7d (274 aa).

The Extracellular segment spans residues 1–8; that stretch reads MVPDLIRN. A helical membrane pass occupies residues 9–29; that stretch reads VVGIVGNVISFGLFLSPVPTF. Residues 9 to 96 enclose the MtN3/slv 1 domain; it reads VVGIVGNVIS…TIFFLFSDKK (88 aa). At 30–45 the chain is on the cytoplasmic side; that stretch reads WRIIKNKDVRDFKADQ. Residues 46-66 form a helical membrane-spanning segment; the sequence is YLATLLNCMLWVFYGLPIVHP. The Extracellular portion of the chain corresponds to 67–68; it reads NS. A helical membrane pass occupies residues 69-89; it reads ILVVTINGIGLVIEAVYLTIF. Topologically, residues 90–100 are cytoplasmic; that stretch reads FLFSDKKNKKK. Residues 101 to 121 traverse the membrane as a helical segment; the sequence is MGVVLATEALFMAAVALGVLL. The Extracellular segment spans residues 122-130; sequence DAHTHQRRS. The helical transmembrane segment at 131 to 151 threads the bilayer; that stretch reads LIVGILCVIFGTIMYSSPLTI. Residues 132–214 enclose the MtN3/slv 2 domain; sequence IVGILCVIFG…QLILYAIYYR (83 aa). The Cytoplasmic segment spans residues 152 to 164; the sequence is MSQVVKTKSVEYM. The helical transmembrane segment at 165-185 threads the bilayer; sequence PLLLSVVSFLNGLCWTSYALI. At 186–188 the chain is on the extracellular side; sequence RFD. Residues 189 to 209 traverse the membrane as a helical segment; it reads IFITIPNGLGVLFALMQLILY. Residues 210–274 are Cytoplasmic-facing; the sequence is AIYYRTTPKK…SISRLSHKLA (65 aa). Residues 218 to 274 form a disordered region; sequence KKPSTTGPHPRSRIRTSSYQPSPPSPRAPASSPLSARTTTSMAAMSPSISRLSHKLA. Residues 245-258 are compositionally biased toward low complexity; sequence APASSPLSARTTTS.

This sequence belongs to the SWEET sugar transporter family. As to quaternary structure, forms homooligomers and/or heterooligomers.

The protein resides in the cell membrane. Functionally, mediates both low-affinity uptake and efflux of sugar across the plasma membrane. The polypeptide is Putative bidirectional sugar transporter SWEET7d (SWEET7D) (Oryza sativa subsp. japonica (Rice)).